The sequence spans 361 residues: Innexin inx1 (361 aa).

The Cytoplasmic segment spans residues 1 to 28 (MYKLLGGLKEYLKWQDIVTDNAIFRLHN). Residues 29–49 (LFTTVLLLTCSLIITATQYVG) traverse the membrane as a helical segment. Residues 50–109 (NPIHCIVNGLPVRPINTYCWITSTFTMPDAFLRQVGSEVAHPGVANDFGDEDAKKYYTYY) are Extracellular-facing. The chain crosses the membrane as a helical span at residues 110–130 (QWVCFVLFFQAMLCYTPKWIW). Residues 131 to 181 (DSIEGGLLRTLIMGLNRGLCQDDEKCMKKKALIEYLLRHIKRHNMYALKYW) are Cytoplasmic-facing. Residues 182 to 202 (FCETLCLVNIIGQLYLMNHFF) form a helical membrane-spanning segment. Residues 203 to 267 (DGEFFSYGLR…LPLNIVNEKT (65 aa)) are Extracellular-facing. The chain crosses the membrane as a helical span at residues 268-288 (YIFLWFWYIILAALLSVLVVY). Over 289–361 (RAVILAVPSV…KIETPSSNNP (73 aa)) the chain is Cytoplasmic.

It belongs to the pannexin family. As to expression, expressed in embryonic neural precursors including the dorsal median neuroblast, glial cells, neuropilar glial ring, developing myoblasts cells and in a circumferential band of epithelial cells at the trochanter/coxa boundary stripe in the developing limb.

It localises to the cell membrane. The protein localises to the cell junction. Its subcellular location is the gap junction. Its function is as follows. Structural components of the gap junctions. This is Innexin inx1 (inx1) from Schistocerca americana (American grasshopper).